Consider the following 85-residue polypeptide: Augerpeptide-s6a (85 aa).

The N-terminal stretch at 1 to 20 (MTLTMSTVVFFSLILLTLGL) is a signal peptide. Residues 21–43 (QPKDKDEGVMGRSRLGKRGLLMR) constitute a propeptide that is removed on maturation. 3 disulfide bridges follow: Cys-54–Cys-65, Cys-58–Cys-70, and Cys-64–Cys-81.

Expressed by the venom duct.

It is found in the secreted. In Terebra subulata (Chocolate spotted auger), this protein is Augerpeptide-s6a.